The following is a 117-amino-acid chain: Large ribosomal subunit protein bL19 (117 aa).

Belongs to the bacterial ribosomal protein bL19 family.

Functionally, this protein is located at the 30S-50S ribosomal subunit interface and may play a role in the structure and function of the aminoacyl-tRNA binding site. The polypeptide is Large ribosomal subunit protein bL19 (Thioalkalivibrio sulfidiphilus (strain HL-EbGR7)).